The sequence spans 281 residues: NADPH-dependent 7-cyano-7-deazaguanine reductase (281 aa).

88 to 90 (VES) is a binding site for substrate. An NADPH-binding site is contributed by 90–91 (SK). Residue Cys-189 is the Thioimide intermediate of the active site. Asp-196 (proton donor) is an active-site residue. 228-229 (HE) serves as a coordination point for substrate. An NADPH-binding site is contributed by 257 to 258 (RG).

This sequence belongs to the GTP cyclohydrolase I family. QueF type 2 subfamily. As to quaternary structure, homodimer.

The protein resides in the cytoplasm. It carries out the reaction 7-aminomethyl-7-carbaguanine + 2 NADP(+) = 7-cyano-7-deazaguanine + 2 NADPH + 3 H(+). The protein operates within tRNA modification; tRNA-queuosine biosynthesis. In terms of biological role, catalyzes the NADPH-dependent reduction of 7-cyano-7-deazaguanine (preQ0) to 7-aminomethyl-7-deazaguanine (preQ1). The protein is NADPH-dependent 7-cyano-7-deazaguanine reductase of Cronobacter sakazakii (strain ATCC BAA-894) (Enterobacter sakazakii).